The following is a 156-amino-acid chain: Nascent polypeptide-associated complex subunit beta (156 aa).

Disordered stretches follow at residues 1-42 (MPID…KDDT) and 129-156 (QANE…AEVE). The region spanning 38–103 (NKDDTKLHNQ…AQEKNLQELF (66 aa)) is the NAC-A/B domain.

The protein belongs to the NAC-beta family. In terms of assembly, part of the nascent polypeptide-associated complex (NAC), consisting of EGD2 and EGD1. NAC associates with ribosomes via EGD1.

It is found in the cytoplasm. The protein localises to the nucleus. Component of the nascent polypeptide-associated complex (NAC), a dynamic component of the ribosomal exit tunnel, protecting the emerging polypeptides from interaction with other cytoplasmic proteins to ensure appropriate nascent protein targeting. The NAC complex also promotes mitochondrial protein import by enhancing productive ribosome interactions with the outer mitochondrial membrane and blocks the inappropriate interaction of ribosomes translating non-secretory nascent polypeptides with translocation sites in the membrane of the endoplasmic reticulum. EGD1 may act as a transcription factor that exert a negative effect on the expression of several genes that are transcribed by RNA polymerase II. The sequence is that of Nascent polypeptide-associated complex subunit beta (EGD1) from Candida glabrata (strain ATCC 2001 / BCRC 20586 / JCM 3761 / NBRC 0622 / NRRL Y-65 / CBS 138) (Yeast).